The primary structure comprises 223 residues: Cytidylate kinase (223 aa).

12–20 (GPSGVGKGT) serves as a coordination point for ATP.

The protein belongs to the cytidylate kinase family. Type 1 subfamily.

The protein localises to the cytoplasm. It carries out the reaction CMP + ATP = CDP + ADP. The catalysed reaction is dCMP + ATP = dCDP + ADP. In Xylella fastidiosa (strain M12), this protein is Cytidylate kinase.